The sequence spans 130 residues: Small ribosomal subunit protein eS6 (130 aa).

The protein belongs to the eukaryotic ribosomal protein eS6 family.

In Methanosphaera stadtmanae (strain ATCC 43021 / DSM 3091 / JCM 11832 / MCB-3), this protein is Small ribosomal subunit protein eS6.